Here is a 618-residue protein sequence, read N- to C-terminus: 1-deoxy-D-xylulose-5-phosphate synthase (618 aa).

Thiamine diphosphate contacts are provided by residues His74 and Gly115–Ser117. Mg(2+) is bound at residue Asp146. Thiamine diphosphate is bound by residues Gly147–Ala148, Asn175, Tyr286, and Glu366. Residue Asn175 coordinates Mg(2+).

The protein belongs to the transketolase family. DXPS subfamily. Homodimer. Requires Mg(2+) as cofactor. The cofactor is thiamine diphosphate.

The enzyme catalyses D-glyceraldehyde 3-phosphate + pyruvate + H(+) = 1-deoxy-D-xylulose 5-phosphate + CO2. Its pathway is metabolic intermediate biosynthesis; 1-deoxy-D-xylulose 5-phosphate biosynthesis; 1-deoxy-D-xylulose 5-phosphate from D-glyceraldehyde 3-phosphate and pyruvate: step 1/1. Functionally, catalyzes the acyloin condensation reaction between C atoms 2 and 3 of pyruvate and glyceraldehyde 3-phosphate to yield 1-deoxy-D-xylulose-5-phosphate (DXP). The protein is 1-deoxy-D-xylulose-5-phosphate synthase of Clostridium tetani (strain Massachusetts / E88).